A 162-amino-acid chain; its full sequence is Transcription elongation factor GreB (162 aa).

Residues 52 to 76 are a coiled coil; that stretch reads GKRRLREIDRRIRFLSKRLEALQII.

Belongs to the GreA/GreB family. GreB subfamily.

Necessary for efficient RNA polymerase transcription elongation past template-encoded arresting sites. The arresting sites in DNA have the property of trapping a certain fraction of elongating RNA polymerases that pass through, resulting in locked ternary complexes. Cleavage of the nascent transcript by cleavage factors such as GreA or GreB allows the resumption of elongation from the new 3'terminus. GreB releases sequences of up to 9 nucleotides in length. In Haemophilus ducreyi (strain 35000HP / ATCC 700724), this protein is Transcription elongation factor GreB.